The chain runs to 853 residues: Tape measure protein (853 aa).

Coiled-coil stretches lie at residues 360-387 (REKA…AQQQ) and 548-568 (KVTY…FAQQ). Residues 370-393 (ARKKAEQQTQQDKNAQQQSDTEAS) form a disordered region. Over residues 376–387 (QQTQQDKNAQQQ) the composition is skewed to low complexity.

It belongs to the Lambdavirus tape measure protein family. In terms of assembly, interacts with the tail initiator complex presumably through its C-terminus domain. Interacts with the tail assembly protein G. Interacts with the tail assembly protein GT. Post-translationally, cleaved into mature protein H* by an unidentified protease.

Its subcellular location is the virion. Its function is as follows. Serves as a ruler that controls the length of tail by stopping the tail tube polymerization and is probably released from the tail shaft during infection to facilitate DNA translocation into the host cell. Assembles into a multimeric linear form possibly stabilized by the covering tail assembly proteins G and GT. Its C-terminus fixes the tail tip complex (J, I, L, K), thereby forming the tail assembly initiator complex. Tail tube proteins polymerize around tape measure protein, displacing the tail assembly protein G and GT. When the tail reaches the length specified by the tape measure protein, it stops and becomes capped by the tail terminator protein. Upon tail assembly, tape measure protein is cleaved into a form called H*, that plays a role later during virion entry in a new cell. Once assembled, the virion is released and can infect new cells by binding to the entry receptor LambB. After opening of a pore on the external membrane, the entry protein H* protein is probably released in the periplasmic space for successful DNA injection. This Escherichia phage lambda (Bacteriophage lambda) protein is Tape measure protein.